We begin with the raw amino-acid sequence, 403 residues long: Aminomethyltransferase, mitochondrial (403 aa).

Residues 1–28 (MQRAVSVVARLGFRLQAFPPALCRPLSC) constitute a mitochondrion transit peptide. Residues E232, R261, and Y399 each coordinate substrate.

It belongs to the GcvT family. In terms of assembly, the glycine cleavage system is composed of four proteins: P, T, L and H.

Its subcellular location is the mitochondrion. The enzyme catalyses N(6)-[(R)-S(8)-aminomethyldihydrolipoyl]-L-lysyl-[protein] + (6S)-5,6,7,8-tetrahydrofolate = N(6)-[(R)-dihydrolipoyl]-L-lysyl-[protein] + (6R)-5,10-methylene-5,6,7,8-tetrahydrofolate + NH4(+). In terms of biological role, the glycine cleavage system catalyzes the degradation of glycine. This Homo sapiens (Human) protein is Aminomethyltransferase, mitochondrial.